The primary structure comprises 399 residues: Lysosomal acid lipase/cholesteryl ester hydrolase (399 aa).

Residues 1 to 27 form the signal peptide; it reads MKMRFLGLVVCLVLWTLHSEASGGKLT. A propeptide spans 28–76 (removed in mature form); that stretch reads AVNPETNMNVSEIISYWGFPSEEYLVETEDGYILCLNRIPHGRKNHSDK. N-linked (GlcNAc...) asparagine glycans are attached at residues Asn-36, Asn-72, Asn-101, and Asn-161. The AB hydrolase-1 domain occupies 80-380; that stretch reads PVVFLQHGLL…EWEHLDFIWG (301 aa). Ser-174 acts as the Charge relay system in catalysis. Residues Asn-273 and Asn-321 are each glycosylated (N-linked (GlcNAc...) asparagine). Catalysis depends on His-374, which acts as the Charge relay system.

The protein belongs to the AB hydrolase superfamily. Lipase family. In terms of assembly, monomer. In terms of processing, glycosylation is not essential for catalytic activity.

Its subcellular location is the lysosome. The enzyme catalyses a sterol ester + H2O = a sterol + a fatty acid + H(+). It catalyses the reaction cholesteryl (9Z-octadecenoate) + H2O = cholesterol + (9Z)-octadecenoate + H(+). The catalysed reaction is a triacylglycerol + H2O = a 1,2-diacylglycerol + a fatty acid + H(+). It carries out the reaction 1,2-di-(9Z-octadecenoyl)-glycerol + (9Z)-octadecenoate + H(+) = 1,2,3-tri-(9Z-octadecenoyl)-glycerol + H2O. The enzyme catalyses a 1,2-diacylglycerol + H2O = a 1-acylglycerol + a fatty acid + H(+). It catalyses the reaction 1,2-di-(9Z-octadecenoyl)-glycerol + H2O = 1-(9Z-octadecenoyl)-glycerol + (9Z)-octadecenoate + H(+). The catalysed reaction is a 1,3-diacylglycerol + H2O = a 1-acylglycerol + a fatty acid + H(+). It carries out the reaction 1,3-di-(9Z-octadecenoyl)-glycerol + H2O = 1-(9Z-octadecenoyl)-glycerol + (9Z)-octadecenoate + H(+). In terms of biological role, catalyzes the deacylation of cholesteryl ester core lipids of endocytosed low density lipoproteins to generate free fatty acids and cholesterol. Hydrolyzes triglycerides (1,2,3-triacylglycerol) and diglycerides (such as 1,2-diacylglycerol and 1,3-diacylglycerol) with preference for the acyl moieties at the sn-1 or sn-3 positions. The polypeptide is Lysosomal acid lipase/cholesteryl ester hydrolase (LIPA) (Macaca fascicularis (Crab-eating macaque)).